The sequence spans 397 residues: Riboflavin biosynthesis protein RibBA (397 aa).

Residues 1–199 (MFHRIEEALE…IEDLIAYRRH (199 aa)) are DHBP synthase. D-ribulose 5-phosphate contacts are provided by residues 26-27 (RE), Asp31, 138-142 (RAGHT), and Glu162. A Mg(2+)-binding site is contributed by Glu27. His141 serves as a coordination point for Mg(2+). The segment at 200-397 (HETLVTREVE…VNKLGHLLNL (198 aa)) is GTP cyclohydrolase II. A GTP-binding site is contributed by 250 to 254 (RVHSE). Zn(2+) contacts are provided by Cys255, Cys266, and Cys268. Residues Gln271, 293-295 (EGR), and Thr315 contribute to the GTP site. Residue Asp327 is the Proton acceptor; for GTP cyclohydrolase activity of the active site. The active-site Nucleophile; for GTP cyclohydrolase activity is the Arg329. GTP-binding residues include Thr350 and Lys355.

This sequence in the N-terminal section; belongs to the DHBP synthase family. The protein in the C-terminal section; belongs to the GTP cyclohydrolase II family. Mg(2+) is required as a cofactor. It depends on Mn(2+) as a cofactor. The cofactor is Zn(2+).

It carries out the reaction D-ribulose 5-phosphate = (2S)-2-hydroxy-3-oxobutyl phosphate + formate + H(+). The catalysed reaction is GTP + 4 H2O = 2,5-diamino-6-hydroxy-4-(5-phosphoribosylamino)-pyrimidine + formate + 2 phosphate + 3 H(+). Its pathway is cofactor biosynthesis; riboflavin biosynthesis; 2-hydroxy-3-oxobutyl phosphate from D-ribulose 5-phosphate: step 1/1. It participates in cofactor biosynthesis; riboflavin biosynthesis; 5-amino-6-(D-ribitylamino)uracil from GTP: step 1/4. Catalyzes the conversion of D-ribulose 5-phosphate to formate and 3,4-dihydroxy-2-butanone 4-phosphate. Its function is as follows. Catalyzes the conversion of GTP to 2,5-diamino-6-ribosylamino-4(3H)-pyrimidinone 5'-phosphate (DARP), formate and pyrophosphate. In Bacillus cereus (strain G9842), this protein is Riboflavin biosynthesis protein RibBA.